Consider the following 306-residue polypeptide: tRNA pseudouridine synthase B (306 aa).

Asp48 (nucleophile) is an active-site residue.

This sequence belongs to the pseudouridine synthase TruB family. Type 1 subfamily.

The enzyme catalyses uridine(55) in tRNA = pseudouridine(55) in tRNA. Responsible for synthesis of pseudouridine from uracil-55 in the psi GC loop of transfer RNAs. This Haemophilus influenzae (strain PittEE) protein is tRNA pseudouridine synthase B.